The chain runs to 356 residues: uncharacterized protein (356 aa).

A disordered region spans residues 25-72 (EENNQENNKKFIEEFYPDKESDKNFSDDDSDDSDDSDDSENSDEEFDN). The segment covering 31-50 (NNKKFIEEFYPDKESDKNFS) has biased composition (basic and acidic residues). Acidic residues predominate over residues 51–70 (DDDSDDSDDSDDSENSDEEF). Residues 328–356 (EDTLNHSHSNKIKELENKITELKYQNEIN) adopt a coiled-coil conformation.

This sequence belongs to the mimivirus L17/R827 family.

This is an uncharacterized protein from Acanthamoeba polyphaga mimivirus (APMV).